We begin with the raw amino-acid sequence, 389 residues long: Cobalt-precorrin-5B C(1)-methyltransferase (389 aa).

Residues 1–25 (MESRADHAVPADEGHGATEPPRGRD) are disordered.

This sequence belongs to the CbiD family.

The enzyme catalyses Co-precorrin-5B + S-adenosyl-L-methionine = Co-precorrin-6A + S-adenosyl-L-homocysteine. The protein operates within cofactor biosynthesis; adenosylcobalamin biosynthesis; cob(II)yrinate a,c-diamide from sirohydrochlorin (anaerobic route): step 6/10. Functionally, catalyzes the methylation of C-1 in cobalt-precorrin-5B to form cobalt-precorrin-6A. The protein is Cobalt-precorrin-5B C(1)-methyltransferase of Nitratidesulfovibrio vulgaris (strain ATCC 29579 / DSM 644 / CCUG 34227 / NCIMB 8303 / VKM B-1760 / Hildenborough) (Desulfovibrio vulgaris).